The following is a 534-amino-acid chain: Serine protease vicPb (534 aa).

An N-terminal signal peptide occupies residues 1-17; that stretch reads MLRYLLIPILYLQVVLG. 3 N-linked (GlcNAc...) asparagine glycosylation sites follow: Asn34, Asn65, and Asn126. Ser174 serves as the catalytic Charge relay system. 5 N-linked (GlcNAc...) asparagine glycosylation sites follow: Asn297, Asn335, Asn352, Asn415, and Asn437. Asp451 acts as the Charge relay system in catalysis.

This sequence belongs to the peptidase S28 family.

The protein operates within mycotoxin biosynthesis. Its function is as follows. Serine protease, part of the gene cluster that mediates the biosynthesis of the secondary metabolite victorin, the molecular basis for Victoria blight of oats. Within the pathway, vicPa and vicPb are probably involved in the processing of the vicA1 and vicA2 precursors. The pathway starts with the processing of the precursor vicA1 by several endopeptidases including kexin proteases as well as the cluster-specific S28 family peptidases vicPa and vicPb to produce 7 identical copies of the hexapeptide Gly-Leu-Lys-Leu-Ala-Phe. After being excised from the precursor peptide, the core peptides are cyclized and modified post-translationally by enzymes encoded within the gene cluster. The ustYa family oxidase vicYb is required for the formation of the macrocycle in victorin and the copper amine oxidases (CAOs) vicK1 and vicK2 are responsible for converting victorin to the active form by oxidizing the N-terminal glycyl residue in the peptides to glyoxylate. Relaxed substrate specificity of enzymes in the victorin biosynthetic pathway results in a metabolic grid that produces a set of analogs including victorinines B, C, E or HV-toxin M. The sequence is that of Serine protease vicPb from Bipolaris victoriae (strain FI3) (Victoria blight of oats agent).